A 276-amino-acid polypeptide reads, in one-letter code: Diaminopimelate epimerase (276 aa).

Residues Asn-13, Gln-46, and Asn-66 each contribute to the substrate site. The active-site Proton donor is Cys-75. Residues 76–77 (GN), Asn-159, Asn-192, and 210–211 (ER) each bind substrate. Cys-219 functions as the Proton acceptor in the catalytic mechanism. Position 220–221 (220–221 (GT)) interacts with substrate.

This sequence belongs to the diaminopimelate epimerase family. In terms of assembly, homodimer.

It localises to the cytoplasm. The catalysed reaction is (2S,6S)-2,6-diaminopimelate = meso-2,6-diaminopimelate. The protein operates within amino-acid biosynthesis; L-lysine biosynthesis via DAP pathway; DL-2,6-diaminopimelate from LL-2,6-diaminopimelate: step 1/1. In terms of biological role, catalyzes the stereoinversion of LL-2,6-diaminopimelate (L,L-DAP) to meso-diaminopimelate (meso-DAP), a precursor of L-lysine and an essential component of the bacterial peptidoglycan. The sequence is that of Diaminopimelate epimerase from Aeromonas salmonicida (strain A449).